Reading from the N-terminus, the 205-residue chain is ATP-dependent dethiobiotin synthetase BioD (205 aa).

Mg(2+) is bound at residue threonine 16. Lysine 32 is an active-site residue. Threonine 36 is a binding site for substrate. Residue glutamate 97 participates in Mg(2+) binding. Position 97–100 (97–100) interacts with ATP; the sequence is EGAG.

This sequence belongs to the dethiobiotin synthetase family. Homodimer. It depends on Mg(2+) as a cofactor.

The protein localises to the cytoplasm. It carries out the reaction (7R,8S)-7,8-diammoniononanoate + CO2 + ATP = (4R,5S)-dethiobiotin + ADP + phosphate + 3 H(+). Its pathway is cofactor biosynthesis; biotin biosynthesis; biotin from 7,8-diaminononanoate: step 1/2. Catalyzes a mechanistically unusual reaction, the ATP-dependent insertion of CO2 between the N7 and N8 nitrogen atoms of 7,8-diaminopelargonic acid (DAPA, also called 7,8-diammoniononanoate) to form a ureido ring. This is ATP-dependent dethiobiotin synthetase BioD from Paramagnetospirillum magneticum (strain ATCC 700264 / AMB-1) (Magnetospirillum magneticum).